Consider the following 367-residue polypeptide: Dual-specificity RNA methyltransferase RlmN (367 aa).

The Proton acceptor role is filled by glutamate 91. The region spanning 102–337 (GKVRMTQCLS…AIIRKSKGQD (236 aa)) is the Radical SAM core domain. The cysteines at positions 109 and 342 are disulfide-linked. The [4Fe-4S] cluster site is built by cysteine 116, cysteine 120, and cysteine 123. S-adenosyl-L-methionine contacts are provided by residues 169–170 (GE), serine 201, 223–225 (SLH), and asparagine 299. Cysteine 342 acts as the S-methylcysteine intermediate in catalysis.

Belongs to the radical SAM superfamily. RlmN family. [4Fe-4S] cluster serves as cofactor.

The protein localises to the cytoplasm. It catalyses the reaction adenosine(2503) in 23S rRNA + 2 reduced [2Fe-2S]-[ferredoxin] + 2 S-adenosyl-L-methionine = 2-methyladenosine(2503) in 23S rRNA + 5'-deoxyadenosine + L-methionine + 2 oxidized [2Fe-2S]-[ferredoxin] + S-adenosyl-L-homocysteine. It carries out the reaction adenosine(37) in tRNA + 2 reduced [2Fe-2S]-[ferredoxin] + 2 S-adenosyl-L-methionine = 2-methyladenosine(37) in tRNA + 5'-deoxyadenosine + L-methionine + 2 oxidized [2Fe-2S]-[ferredoxin] + S-adenosyl-L-homocysteine. Its function is as follows. Specifically methylates position 2 of adenine 2503 in 23S rRNA and position 2 of adenine 37 in tRNAs. m2A2503 modification seems to play a crucial role in the proofreading step occurring at the peptidyl transferase center and thus would serve to optimize ribosomal fidelity. The polypeptide is Dual-specificity RNA methyltransferase RlmN (Nitratidesulfovibrio vulgaris (strain DSM 19637 / Miyazaki F) (Desulfovibrio vulgaris)).